A 101-amino-acid polypeptide reads, in one-letter code: Small ribosomal subunit protein uS14 (101 aa).

It belongs to the universal ribosomal protein uS14 family. As to quaternary structure, part of the 30S ribosomal subunit. Contacts proteins S3 and S10.

Its function is as follows. Binds 16S rRNA, required for the assembly of 30S particles and may also be responsible for determining the conformation of the 16S rRNA at the A site. The chain is Small ribosomal subunit protein uS14 from Novosphingobium aromaticivorans (strain ATCC 700278 / DSM 12444 / CCUG 56034 / CIP 105152 / NBRC 16084 / F199).